A 107-amino-acid polypeptide reads, in one-letter code: Universal stress protein B homolog (107 aa).

Transmembrane regions (helical) follow at residues 6–23 and 89–106; these read TILFALMVVTCVNWARYF and LFILSSALLGVTLLSSFI.

It belongs to the universal stress protein B family.

Its subcellular location is the cell inner membrane. In Vibrio atlanticus (strain LGP32) (Vibrio splendidus (strain Mel32)), this protein is Universal stress protein B homolog.